The following is a 202-amino-acid chain: Small ribosomal subunit protein uS4 (202 aa).

Residues 22–43 (TRKNARRAYPPGQHGQNRRKRS) are disordered. Residues 90 to 152 (MRLDNTVFRL…DKSRKLVQAN (63 aa)) form the S4 RNA-binding domain.

It belongs to the universal ribosomal protein uS4 family. Part of the 30S ribosomal subunit. Contacts protein S5. The interaction surface between S4 and S5 is involved in control of translational fidelity.

One of the primary rRNA binding proteins, it binds directly to 16S rRNA where it nucleates assembly of the body of the 30S subunit. In terms of biological role, with S5 and S12 plays an important role in translational accuracy. This chain is Small ribosomal subunit protein uS4, found in Gloeothece citriformis (strain PCC 7424) (Cyanothece sp. (strain PCC 7424)).